The primary structure comprises 105 residues: Large ribosomal subunit protein bL21 (105 aa).

Belongs to the bacterial ribosomal protein bL21 family. In terms of assembly, part of the 50S ribosomal subunit. Contacts protein L20.

Its function is as follows. This protein binds to 23S rRNA in the presence of protein L20. This is Large ribosomal subunit protein bL21 from Rhizobium johnstonii (strain DSM 114642 / LMG 32736 / 3841) (Rhizobium leguminosarum bv. viciae).